A 207-amino-acid chain; its full sequence is N-(5'-phosphoribosyl)anthranilate isomerase (207 aa).

It belongs to the TrpF family.

The enzyme catalyses N-(5-phospho-beta-D-ribosyl)anthranilate = 1-(2-carboxyphenylamino)-1-deoxy-D-ribulose 5-phosphate. It functions in the pathway amino-acid biosynthesis; L-tryptophan biosynthesis; L-tryptophan from chorismate: step 3/5. The chain is N-(5'-phosphoribosyl)anthranilate isomerase from Staphylococcus epidermidis (strain ATCC 35984 / DSM 28319 / BCRC 17069 / CCUG 31568 / BM 3577 / RP62A).